A 185-amino-acid chain; its full sequence is CASP-like protein 2C3 (185 aa).

At 1 to 13 (MAAAARVSEVKAE) the chain is on the cytoplasmic side. A helical transmembrane segment spans residues 14-34 (GLLRGACAALAAAAALLVGLS). Over 35–53 (TQTETVLLVRKKATVKDVQ) the chain is Extracellular. The chain crosses the membrane as a helical span at residues 54-74 (ALWVLAMAAAAAAGYHLLQLL). Residues 75 to 104 (KCLYLGRVGGARPCRRSSRALAWTCLLLDK) are Cytoplasmic-facing. A helical transmembrane segment spans residues 105–125 (ACAYTTFATTVAAAQACVVAL). Residues 126-146 (DGAHAVQWTKLCNIYTRFCEQ) lie on the Extracellular side of the membrane. A helical membrane pass occupies residues 147-167 (VAGSLVLGMLAAVGTAVLSAA). Over 168 to 185 (SARNVFRHYSSLETYAAH) the chain is Cytoplasmic.

The protein belongs to the Casparian strip membrane proteins (CASP) family. Homodimer and heterodimers.

The protein resides in the cell membrane. This Zea mays (Maize) protein is CASP-like protein 2C3.